Here is a 229-residue protein sequence, read N- to C-terminus: PHO85 cyclin-5 (229 aa).

Over residues 1 to 24 (MDGNHRFTPDSKEFNTVVKSKESS) the composition is skewed to basic and acidic residues. A disordered region spans residues 1 to 46 (MDGNHRFTPDSKEFNTVVKSKESSTGRNPYQTPPLEHNGTHHQTNY).

Belongs to the cyclin family. PCL1,2 subfamily. As to quaternary structure, forms a cyclin-CDK complex with PHO85.

In terms of biological role, cyclin partner of the cyclin-dependent kinase (CDK) PHO85. Positively controls degradation of transcription factor GCN4 under favorable growth conditions. The PCL5-PHO85 cyclin-CDK holoenzyme phosphorylates GCN4, which is required for its degradation by the E3 ubiquitin ligase complex SCF(Cdc4). Amino acid starvation reduces PCL5-PHO85-associated GCN4 kinase activity and leads to stabilization of GCN4. The sequence is that of PHO85 cyclin-5 (PCL5) from Saccharomyces cerevisiae (strain ATCC 204508 / S288c) (Baker's yeast).